Reading from the N-terminus, the 374-residue chain is Pectate lyase 2 (374 aa).

An N-terminal signal peptide occupies residues 1–22; it reads MKYLLPTAATGLLLLAAQPAVA. Cys93 and Cys176 are joined by a disulfide. Positions 150, 152, 187, and 191 each coordinate Ca(2+). Arg239 is an active-site residue. A disulfide bridge connects residues Cys350 and Cys373.

This sequence belongs to the polysaccharide lyase 1 family. PLADES subfamily. Ca(2+) is required as a cofactor.

The protein resides in the secreted. It catalyses the reaction Eliminative cleavage of (1-&gt;4)-alpha-D-galacturonan to give oligosaccharides with 4-deoxy-alpha-D-galact-4-enuronosyl groups at their non-reducing ends.. It participates in glycan metabolism; pectin degradation; 2-dehydro-3-deoxy-D-gluconate from pectin: step 2/5. In terms of biological role, involved in maceration and soft-rotting of plant tissue. The chain is Pectate lyase 2 (pel2) from Pectobacterium atrosepticum (strain SCRI 1043 / ATCC BAA-672) (Erwinia carotovora subsp. atroseptica).